Consider the following 596-residue polypeptide: A-type ATP synthase subunit A (596 aa).

Residue 241–248 (GPFGSGKT) participates in ATP binding.

It belongs to the ATPase alpha/beta chains family. Has multiple subunits with at least A(3), B(3), C, D, E, F, H, I and proteolipid K(x).

It is found in the cell membrane. The enzyme catalyses ATP + H2O + 4 H(+)(in) = ADP + phosphate + 5 H(+)(out). In terms of biological role, component of the A-type ATP synthase that produces ATP from ADP in the presence of a proton gradient across the membrane. The A chain is the catalytic subunit. This chain is A-type ATP synthase subunit A, found in Ignicoccus hospitalis (strain KIN4/I / DSM 18386 / JCM 14125).